The primary structure comprises 159 residues: SsrA-binding protein (159 aa).

The protein belongs to the SmpB family.

The protein resides in the cytoplasm. Its function is as follows. Required for rescue of stalled ribosomes mediated by trans-translation. Binds to transfer-messenger RNA (tmRNA), required for stable association of tmRNA with ribosomes. tmRNA and SmpB together mimic tRNA shape, replacing the anticodon stem-loop with SmpB. tmRNA is encoded by the ssrA gene; the 2 termini fold to resemble tRNA(Ala) and it encodes a 'tag peptide', a short internal open reading frame. During trans-translation Ala-aminoacylated tmRNA acts like a tRNA, entering the A-site of stalled ribosomes, displacing the stalled mRNA. The ribosome then switches to translate the ORF on the tmRNA; the nascent peptide is terminated with the 'tag peptide' encoded by the tmRNA and targeted for degradation. The ribosome is freed to recommence translation, which seems to be the essential function of trans-translation. The sequence is that of SsrA-binding protein from Frankia casuarinae (strain DSM 45818 / CECT 9043 / HFP020203 / CcI3).